Reading from the N-terminus, the 227-residue chain is Phosphoribosylformylglycinamidine synthase subunit PurQ (227 aa).

One can recognise a Glutamine amidotransferase type-1 domain in the interval 3-225 (FAVIVFPGSN…LRNWRESHVV (223 aa)). Cys-86 acts as the Nucleophile in catalysis. Residues His-194 and Glu-196 contribute to the active site.

As to quaternary structure, part of the FGAM synthase complex composed of 1 PurL, 1 PurQ and 2 PurS subunits.

The protein localises to the cytoplasm. The catalysed reaction is N(2)-formyl-N(1)-(5-phospho-beta-D-ribosyl)glycinamide + L-glutamine + ATP + H2O = 2-formamido-N(1)-(5-O-phospho-beta-D-ribosyl)acetamidine + L-glutamate + ADP + phosphate + H(+). The enzyme catalyses L-glutamine + H2O = L-glutamate + NH4(+). The protein operates within purine metabolism; IMP biosynthesis via de novo pathway; 5-amino-1-(5-phospho-D-ribosyl)imidazole from N(2)-formyl-N(1)-(5-phospho-D-ribosyl)glycinamide: step 1/2. Part of the phosphoribosylformylglycinamidine synthase complex involved in the purines biosynthetic pathway. Catalyzes the ATP-dependent conversion of formylglycinamide ribonucleotide (FGAR) and glutamine to yield formylglycinamidine ribonucleotide (FGAM) and glutamate. The FGAM synthase complex is composed of three subunits. PurQ produces an ammonia molecule by converting glutamine to glutamate. PurL transfers the ammonia molecule to FGAR to form FGAM in an ATP-dependent manner. PurS interacts with PurQ and PurL and is thought to assist in the transfer of the ammonia molecule from PurQ to PurL. The protein is Phosphoribosylformylglycinamidine synthase subunit PurQ of Halalkalibacterium halodurans (strain ATCC BAA-125 / DSM 18197 / FERM 7344 / JCM 9153 / C-125) (Bacillus halodurans).